The primary structure comprises 459 residues: ATP synthase subunit beta (459 aa).

An ATP-binding site is contributed by 148 to 155 (GGAGVGKT).

The protein belongs to the ATPase alpha/beta chains family. F-type ATPases have 2 components, CF(1) - the catalytic core - and CF(0) - the membrane proton channel. CF(1) has five subunits: alpha(3), beta(3), gamma(1), delta(1), epsilon(1). CF(0) has three main subunits: a(1), b(2) and c(9-12). The alpha and beta chains form an alternating ring which encloses part of the gamma chain. CF(1) is attached to CF(0) by a central stalk formed by the gamma and epsilon chains, while a peripheral stalk is formed by the delta and b chains.

The protein localises to the cell inner membrane. The enzyme catalyses ATP + H2O + 4 H(+)(in) = ADP + phosphate + 5 H(+)(out). Produces ATP from ADP in the presence of a proton gradient across the membrane. The catalytic sites are hosted primarily by the beta subunits. The polypeptide is ATP synthase subunit beta (Burkholderia mallei (strain NCTC 10229)).